A 497-amino-acid chain; its full sequence is Glutamate--tRNA ligase (497 aa).

Positions 13–23 (PSPTGTPHVGM) match the 'HIGH' region motif. A 'KMSKS' region motif is present at residues 257–261 (KLSKR). Residue Lys-260 coordinates ATP.

This sequence belongs to the class-I aminoacyl-tRNA synthetase family. Glutamate--tRNA ligase type 1 subfamily. Monomer.

It is found in the cytoplasm. The catalysed reaction is tRNA(Glu) + L-glutamate + ATP = L-glutamyl-tRNA(Glu) + AMP + diphosphate. Functionally, catalyzes the attachment of glutamate to tRNA(Glu) in a two-step reaction: glutamate is first activated by ATP to form Glu-AMP and then transferred to the acceptor end of tRNA(Glu). This is Glutamate--tRNA ligase from Corynebacterium diphtheriae (strain ATCC 700971 / NCTC 13129 / Biotype gravis).